A 492-amino-acid polypeptide reads, in one-letter code: Protein nucleotidyltransferase YdiU (492 aa).

The ATP site is built by G88, G90, R91, K111, D123, G124, R174, and R181. The active-site Proton acceptor is the D250. Positions 251 and 260 each coordinate Mg(2+). Position 260 (D260) interacts with ATP.

It belongs to the SELO family. Mg(2+) is required as a cofactor. Mn(2+) serves as cofactor.

It catalyses the reaction L-seryl-[protein] + ATP = 3-O-(5'-adenylyl)-L-seryl-[protein] + diphosphate. The enzyme catalyses L-threonyl-[protein] + ATP = 3-O-(5'-adenylyl)-L-threonyl-[protein] + diphosphate. The catalysed reaction is L-tyrosyl-[protein] + ATP = O-(5'-adenylyl)-L-tyrosyl-[protein] + diphosphate. It carries out the reaction L-histidyl-[protein] + UTP = N(tele)-(5'-uridylyl)-L-histidyl-[protein] + diphosphate. It catalyses the reaction L-seryl-[protein] + UTP = O-(5'-uridylyl)-L-seryl-[protein] + diphosphate. The enzyme catalyses L-tyrosyl-[protein] + UTP = O-(5'-uridylyl)-L-tyrosyl-[protein] + diphosphate. Functionally, nucleotidyltransferase involved in the post-translational modification of proteins. It can catalyze the addition of adenosine monophosphate (AMP) or uridine monophosphate (UMP) to a protein, resulting in modifications known as AMPylation and UMPylation. The protein is Protein nucleotidyltransferase YdiU of Rhodopseudomonas palustris (strain BisB5).